Here is a 201-residue protein sequence, read N- to C-terminus: dITP/XTP pyrophosphatase (201 aa).

7-12 (SNNAHK) provides a ligand contact to substrate. Asp-72 acts as the Proton acceptor in catalysis. Residue Asp-72 coordinates Mg(2+). Substrate-binding positions include Ser-73, 154 to 157 (FGYD), Lys-177, and 182 to 183 (HR).

It belongs to the HAM1 NTPase family. Homodimer. The cofactor is Mg(2+).

It carries out the reaction XTP + H2O = XMP + diphosphate + H(+). It catalyses the reaction dITP + H2O = dIMP + diphosphate + H(+). The catalysed reaction is ITP + H2O = IMP + diphosphate + H(+). Pyrophosphatase that catalyzes the hydrolysis of nucleoside triphosphates to their monophosphate derivatives, with a high preference for the non-canonical purine nucleotides XTP (xanthosine triphosphate), dITP (deoxyinosine triphosphate) and ITP. Seems to function as a house-cleaning enzyme that removes non-canonical purine nucleotides from the nucleotide pool, thus preventing their incorporation into DNA/RNA and avoiding chromosomal lesions. The polypeptide is dITP/XTP pyrophosphatase (Leuconostoc mesenteroides subsp. mesenteroides (strain ATCC 8293 / DSM 20343 / BCRC 11652 / CCM 1803 / JCM 6124 / NCDO 523 / NBRC 100496 / NCIMB 8023 / NCTC 12954 / NRRL B-1118 / 37Y)).